The primary structure comprises 195 residues: ATP-dependent Clp protease proteolytic subunit 3 (195 aa).

Serine 97 serves as the catalytic Nucleophile. Histidine 122 is a catalytic residue.

The protein belongs to the peptidase S14 family. In terms of assembly, fourteen ClpP subunits assemble into 2 heptameric rings which stack back to back to give a disk-like structure with a central cavity, resembling the structure of eukaryotic proteasomes.

The protein resides in the cytoplasm. It carries out the reaction Hydrolysis of proteins to small peptides in the presence of ATP and magnesium. alpha-casein is the usual test substrate. In the absence of ATP, only oligopeptides shorter than five residues are hydrolyzed (such as succinyl-Leu-Tyr-|-NHMec, and Leu-Tyr-Leu-|-Tyr-Trp, in which cleavage of the -Tyr-|-Leu- and -Tyr-|-Trp bonds also occurs).. In terms of biological role, cleaves peptides in various proteins in a process that requires ATP hydrolysis. Has a chymotrypsin-like activity. Plays a major role in the degradation of misfolded proteins. This chain is ATP-dependent Clp protease proteolytic subunit 3, found in Rhizobium meliloti (strain 1021) (Ensifer meliloti).